Here is a 647-residue protein sequence, read N- to C-terminus: Probable cobalt/nickel-exporting P-type ATPase (647 aa).

5 helical membrane-spanning segments follow: residues 33-53 (WAAA…LGAP), 55-75 (AVVW…PAWV), 94-114 (AAIG…IVIF), 260-280 (AGVV…GADL), and 291-311 (MIVA…LSAI). D339 (4-aspartylphosphate intermediate) is an active-site residue. Mg(2+)-binding residues include D532 and D536. The helical transmembrane segment at 587–607 (VIANLVMAGAAITTLVLWDLF) threads the bilayer.

The protein belongs to the cation transport ATPase (P-type) (TC 3.A.3) family. Type IB subfamily.

The protein localises to the cell membrane. It catalyses the reaction Ni(2+)(out) + ATP + H2O = Ni(2+)(in) + ADP + phosphate + H(+). The catalysed reaction is Co(2+)(out) + ATP + H2O = Co(2+)(in) + ADP + phosphate + H(+). Its function is as follows. Involved in heavy metal homeostasis. Probably exports nickel and cobalt ions out of the cell. The polypeptide is Probable cobalt/nickel-exporting P-type ATPase (ctpD) (Mycolicibacterium smegmatis (strain ATCC 700084 / mc(2)155) (Mycobacterium smegmatis)).